Here is a 388-residue protein sequence, read N- to C-terminus: Probable nitrate transporter NarT (388 aa).

Transmembrane regions (helical) follow at residues 14–34, 45–65, 69–89, 98–118, 139–159, 161–181, 206–226, 242–262, 276–296, 297–317, 330–350, and 359–379; these read TLSL…MPMI, ISIV…PFGY, IIGA…PIFL, MLML…VGVT, GNLG…AIGW, STVR…FFLG, YYLS…GIFL, GIRA…GGII, FLFM…ILFT, VGCL…FKLV, GIVS…ITYV, and LAFI…WHLS.

It belongs to the major facilitator superfamily. Nitrate/nitrite porter (TC 2.A.1.8) family.

Its subcellular location is the cell membrane. Probably required for nitrate uptake under anoxic conditions. Also possibly involved in excretion of nitrite produced by the dissimilatory reduction of nitrate. This is Probable nitrate transporter NarT (narT) from Staphylococcus carnosus (strain TM300).